The sequence spans 1441 residues: Histone-lysine N-methyltransferase SETD5 (1441 aa).

The disordered stretch occupies residues M1–V28. L70 bears the Phosphothreonine mark. Residues S72 and V74 each carry the phosphoserine modification. Residues T156–T202 are disordered. The segment covering R165–K189 has biased composition (basic residues). The segment covering N190 to T202 has biased composition (polar residues). The 122-residue stretch at M269 to D390 folds into the SET domain. 2 disordered regions span residues N417–S683 and M793–N816. Composition is skewed to acidic residues over residues L450–P461 and E479–E501. 2 stretches are compositionally biased toward low complexity: residues S539 to I552 and A561 to S572. Polar residues predominate over residues A575–R588. The span at S611–R621 shows a compositional bias: basic residues. A compositionally biased stretch (low complexity) spans Q635 to E650. Over residues G652–S683 the composition is skewed to polar residues. Phosphoserine is present on residues S829 and S852. Disordered stretches follow at residues Q849–N883, D1036–A1228, and C1243–S1441. A Phosphothreonine modification is found at T855. Residues Q1062 to Q1076 are compositionally biased toward basic residues. A compositionally biased stretch (low complexity) spans D1087 to S1107. The span at P1144–S1163 shows a compositional bias: polar residues. Position 1197 is a phosphoserine (S1197). A compositionally biased stretch (low complexity) spans S1250–S1259. The segment covering P1265–T1275 has biased composition (polar residues). Low complexity predominate over residues P1284–S1300. The span at Y1319–N1333 shows a compositional bias: polar residues. Residues P1335–S1372 show a composition bias toward low complexity. 3 stretches are compositionally biased toward polar residues: residues F1373–P1382, S1389–H1412, and L1429–S1441.

As to quaternary structure, interacts with components of the PAF1 complex (PAF1C) such as LEO1, CTR9 and CDC73. Interacts with NCOR1. Interacts with HDAC3. In terms of tissue distribution, ubiquitously expressed.

The protein localises to the nucleus. The protein resides in the chromosome. The catalysed reaction is L-lysyl(9)-[histone H3] + S-adenosyl-L-methionine = N(6)-methyl-L-lysyl(9)-[histone H3] + S-adenosyl-L-homocysteine + H(+). It carries out the reaction L-lysyl(36)-[histone H3] + 3 S-adenosyl-L-methionine = N(6),N(6),N(6)-trimethyl-L-lysyl(36)-[histone H3] + 3 S-adenosyl-L-homocysteine + 3 H(+). Functionally, chromatin regulator required for brain development: acts as a regulator of RNA elongation rate, thereby regulating neural stem cell (NSC) proliferation and synaptic transmission. May act by mediating trimethylation of 'Lys-36' of histone H3 (H3K36me3), which is essential to allow on-time RNA elongation dynamics. Also monomethylates 'Lys-9' of histone H3 (H3K9me1) in vitro. The relevance of histone methyltransferase activity is however subject to discussion. This is Histone-lysine N-methyltransferase SETD5 from Mus musculus (Mouse).